A 256-amino-acid polypeptide reads, in one-letter code: DNA repair protein RecO (256 aa).

This sequence belongs to the RecO family.

In terms of biological role, involved in DNA repair and RecF pathway recombination. The protein is DNA repair protein RecO of Rhizobium etli (strain CIAT 652).